The sequence spans 392 residues: GTPase Obg (392 aa).

Residues 1 to 159 enclose the Obg domain; the sequence is MKFVDEAEIR…RNLKLELMLL (159 aa). Residues 121 to 146 form a disordered region; the sequence is GFHGLGNTRFKSSTNRAPRQKTNGTP. Residues 129–145 are compositionally biased toward polar residues; the sequence is RFKSSTNRAPRQKTNGT. Residues 160–333 form the OBG-type G domain; that stretch reads ADVGLLGMPN…LCNDVMDFIE (174 aa). GTP is bound by residues 166-173, 191-195, 213-216, 283-286, and 314-316; these read GMPNAGKS, FTTLV, DIPG, NKVD, and SAF. 2 residues coordinate Mg(2+): S173 and T193.

Belongs to the TRAFAC class OBG-HflX-like GTPase superfamily. OBG GTPase family. In terms of assembly, monomer. Requires Mg(2+) as cofactor.

It localises to the cytoplasm. An essential GTPase which binds GTP, GDP and possibly (p)ppGpp with moderate affinity, with high nucleotide exchange rates and a fairly low GTP hydrolysis rate. Plays a role in control of the cell cycle, stress response, ribosome biogenesis and in those bacteria that undergo differentiation, in morphogenesis control. The sequence is that of GTPase Obg from Alteromonas mediterranea (strain DSM 17117 / CIP 110805 / LMG 28347 / Deep ecotype).